We begin with the raw amino-acid sequence, 535 residues long: Succinate-semialdehyde dehydrogenase, mitochondrial (535 aa).

The N-terminal 47 residues, 1–47 (MATCIWLRSCGARRLGSTFPGCRLRPRAGGLVPASGPAPGPAQLRCY), are a transit peptide targeting the mitochondrion. Lysine 126 bears the N6-acetyllysine; alternate mark. Lysine 126 bears the N6-succinyllysine; alternate mark. N6-succinyllysine is present on residues lysine 135 and lysine 184. 202–204 (TPW) lines the NAD(+) pocket. Residue arginine 213 coordinates substrate. 228–231 (KPAE) is a binding site for NAD(+). Lysine 265 is modified (N6-acetyllysine; alternate). The residue at position 265 (lysine 265) is an N6-succinyllysine; alternate. NAD(+) contacts are provided by residues 284 to 289 (GSTTTG) and glutamate 306. The Proton acceptor role is filled by glutamate 306. Arginine 334 lines the substrate pocket. Cysteine 340 acts as the Nucleophile in catalysis. A disulfide bond links cysteine 340 and cysteine 342. Lysine 365 carries the N6-acetyllysine modification. Position 402 is an N6-succinyllysine (lysine 402). Lysine 411 carries the post-translational modification N6-acetyllysine. Position 438–440 (438–440 (ETF)) interacts with NAD(+). A substrate-binding site is contributed by serine 498. Serine 499 carries the phosphoserine modification.

This sequence belongs to the aldehyde dehydrogenase family. As to quaternary structure, homotetramer. As to expression, brain, pancreas, heart, liver, skeletal muscle and kidney. Lower in placenta.

It localises to the mitochondrion. It catalyses the reaction succinate semialdehyde + NAD(+) + H2O = succinate + NADH + 2 H(+). It functions in the pathway amino-acid degradation; 4-aminobutanoate degradation. With respect to regulation, redox-regulated. Inhibited under oxydizing conditions. Inhibited by hydrogen peroxide H(2)O(2). Its function is as follows. Catalyzes one step in the degradation of the inhibitory neurotransmitter gamma-aminobutyric acid (GABA). This Homo sapiens (Human) protein is Succinate-semialdehyde dehydrogenase, mitochondrial.